A 223-amino-acid chain; its full sequence is Thiamine-phosphate synthase (223 aa).

4-amino-2-methyl-5-(diphosphooxymethyl)pyrimidine contacts are provided by residues 45–49 and asparagine 77; that span reads QYREK. Residues aspartate 78 and aspartate 97 each coordinate Mg(2+). A 4-amino-2-methyl-5-(diphosphooxymethyl)pyrimidine-binding site is contributed by threonine 116. 142–144 serves as a coordination point for 2-[(2R,5Z)-2-carboxy-4-methylthiazol-5(2H)-ylidene]ethyl phosphate; sequence SYT. Lysine 145 is a binding site for 4-amino-2-methyl-5-(diphosphooxymethyl)pyrimidine. Residues glycine 173 and 193–194 contribute to the 2-[(2R,5Z)-2-carboxy-4-methylthiazol-5(2H)-ylidene]ethyl phosphate site; that span reads VT.

Belongs to the thiamine-phosphate synthase family. Requires Mg(2+) as cofactor.

The enzyme catalyses 2-[(2R,5Z)-2-carboxy-4-methylthiazol-5(2H)-ylidene]ethyl phosphate + 4-amino-2-methyl-5-(diphosphooxymethyl)pyrimidine + 2 H(+) = thiamine phosphate + CO2 + diphosphate. It catalyses the reaction 2-(2-carboxy-4-methylthiazol-5-yl)ethyl phosphate + 4-amino-2-methyl-5-(diphosphooxymethyl)pyrimidine + 2 H(+) = thiamine phosphate + CO2 + diphosphate. The catalysed reaction is 4-methyl-5-(2-phosphooxyethyl)-thiazole + 4-amino-2-methyl-5-(diphosphooxymethyl)pyrimidine + H(+) = thiamine phosphate + diphosphate. It functions in the pathway cofactor biosynthesis; thiamine diphosphate biosynthesis; thiamine phosphate from 4-amino-2-methyl-5-diphosphomethylpyrimidine and 4-methyl-5-(2-phosphoethyl)-thiazole: step 1/1. Functionally, condenses 4-methyl-5-(beta-hydroxyethyl)thiazole monophosphate (THZ-P) and 2-methyl-4-amino-5-hydroxymethyl pyrimidine pyrophosphate (HMP-PP) to form thiamine monophosphate (TMP). The chain is Thiamine-phosphate synthase from Dictyoglomus turgidum (strain DSM 6724 / Z-1310).